The chain runs to 110 residues: Large ribosomal subunit protein uL22 (110 aa).

Belongs to the universal ribosomal protein uL22 family. In terms of assembly, part of the 50S ribosomal subunit.

This protein binds specifically to 23S rRNA; its binding is stimulated by other ribosomal proteins, e.g. L4, L17, and L20. It is important during the early stages of 50S assembly. It makes multiple contacts with different domains of the 23S rRNA in the assembled 50S subunit and ribosome. In terms of biological role, the globular domain of the protein is located near the polypeptide exit tunnel on the outside of the subunit, while an extended beta-hairpin is found that lines the wall of the exit tunnel in the center of the 70S ribosome. The protein is Large ribosomal subunit protein uL22 of Stutzerimonas stutzeri (strain A1501) (Pseudomonas stutzeri).